The chain runs to 345 residues: tRNA pseudouridine synthase B (345 aa).

The active-site Nucleophile is aspartate 39.

Belongs to the pseudouridine synthase TruB family. Type 1 subfamily.

It carries out the reaction uridine(55) in tRNA = pseudouridine(55) in tRNA. Functionally, responsible for synthesis of pseudouridine from uracil-55 in the psi GC loop of transfer RNAs. This Rickettsia rickettsii (strain Iowa) protein is tRNA pseudouridine synthase B.